The chain runs to 53 residues: Light-harvesting protein B-800/850 alpha chain (53 aa).

Residues 1–14 (MNQGKIWTVVNPSV) lie on the Cytoplasmic side of the membrane. The helical transmembrane segment at 15 to 35 (GLPLLLGSVTVIAILVHAAVL) threads the bilayer. H31 serves as a coordination point for a bacteriochlorophyll. At 36-53 (SHTTWFPAYWQGGLKKAA) the chain is on the periplasmic side.

Belongs to the antenna complex alpha subunit family. As to quaternary structure, the core complex is formed by different alpha and beta chains, binding bacteriochlorophyll molecules, and arranged most probably in tetrameric structures disposed around the reaction center. The non-pigmented gamma chains may constitute additional components.

Its subcellular location is the cell inner membrane. In terms of biological role, antenna complexes are light-harvesting systems, which transfer the excitation energy to the reaction centers. This is Light-harvesting protein B-800/850 alpha chain from Rhodoblastus acidophilus (Rhodopseudomonas acidophila).